The following is a 688-amino-acid chain: MSSRNNNKLPSNLPQLQNLIKRDPPAYVEEFLQQYNHYKSNVEIFKLQPNKPSKELAELVMFMAQISHCYPEHLSNFPQELKDLLSYNHTVLDPDLRMTFCKALILLRNKNLINPSSLLELFFELLRCHDKLLRKTLYTHIVTDIKNINAKHKNNKVNIVLQNFMYTMLRDSNATAAKISLDVMIELYRRNIWNDAKTVNVITTACFSKVTKILVAALTFFLGKDEEEKQDSDSESEDEGPTARDLLVQYATGKKSSKNKKKLEKAMKVLTKHKKKKKPEVFNFSAIHLIHDPQDFAEKLLKQLESSKERFEVKMMLMNLISRLVGIHELFLFNFYPFVQRFLQPHQREVTKILLFAAQASHHLVPPEIIQSLLMTVANNFVTDKNSGEVMTVGINAIKEITARCPLAMTEELLQDLAQYKTHKDKNVMMSARTLIQLFRTLNPQMLQKKFRGKPTEASIEARVQEYGELDAKDYIPGAEILEVENEEENAEGDEDGWESASLSDEADSDGEWVDVHHSSDEEQKEISEKLNSMPLEERKAKAAAVSTSRVLSQEDFQKIRMAQMRKELDAAPGKAQKRKYIEIDSDEERRGELLSLRDIERLHKKPKSDKETRLATAMAGKTDRKEFVRKKTKMNPFSSSTNKEKKKQKNFMMMRYSHNVRSKNKRSFREKQLALRDALLKKRKRMK.

Phosphoserine is present on residues S232, S234, and S236. Residues 254-318 (KKSSKNKKKL…ERFEVKMMLM (65 aa)) are a coiled coil. Residues 484–498 (VENEEENAEGDEDGW) show a composition bias toward acidic residues. Residues 484-524 (VENEEENAEGDEDGWESASLSDEADSDGEWVDVHHSSDEEQ) form a disordered region. A compositionally biased stretch (basic and acidic residues) spans 514–524 (VDVHHSSDEEQ). Residues S586 and S596 each carry the phosphoserine modification. Positions 605–688 (KKPKSDKETR…ALLKKRKRMK (84 aa)) are disordered. The span at 668 to 681 (SFREKQLALRDALL) shows a compositional bias: basic and acidic residues.

It belongs to the SDA1 family.

It is found in the nucleus. The protein resides in the nucleolus. Its function is as follows. Required for 60S pre-ribosomal subunits export to the cytoplasm. The polypeptide is Protein SDA1 homolog (SDAD1) (Bos taurus (Bovine)).